Reading from the N-terminus, the 989-residue chain is ATP-dependent 6-phosphofructokinase subunit alpha (989 aa).

An N-terminal catalytic PFK domain 1 region spans residues Met1–Lys585. ATP contacts are provided by residues Gly220, Arg283–Cys284, and Gly313–Ser316. Asp314 serves as a coordination point for Mg(2+). Beta-D-fructose 6-phosphate-binding positions include Ser359 to Asp361, Arg396, Met403 to Arg405, Glu460, Arg487, and His493 to Arg496. Asp361 (proton acceptor) is an active-site residue. Residues Tyr586–Leu599 are interdomain linker. The interval Asn600–Thr989 is C-terminal regulatory PFK domain 2. Beta-D-fructose 2,6-bisphosphate contacts are provided by residues Arg670, Thr727–Asn731, Arg765, Gln772–Gly774, Glu832, Arg858, His864–Gln867, and Arg963.

This sequence belongs to the phosphofructokinase type A (PFKA) family. ATP-dependent PFK group I subfamily. Eukaryotic two domain clade 'E' sub-subfamily. Heterododecamer of 4 alpha, 4 beta and 4 gamma chains. Mg(2+) serves as cofactor.

It is found in the cytoplasm. It catalyses the reaction beta-D-fructose 6-phosphate + ATP = beta-D-fructose 1,6-bisphosphate + ADP + H(+). Its pathway is carbohydrate degradation; glycolysis; D-glyceraldehyde 3-phosphate and glycerone phosphate from D-glucose: step 3/4. Allosterically activated by ADP, AMP, or fructose 2,6-bisphosphate, and allosterically inhibited by ATP or citrate. Catalyzes the phosphorylation of D-fructose 6-phosphate to fructose 1,6-bisphosphate by ATP, the first committing step of glycolysis. The polypeptide is ATP-dependent 6-phosphofructokinase subunit alpha (PFK1) (Komagataella pastoris (Yeast)).